A 638-amino-acid chain; its full sequence is Methylmalonyl-CoA mutase small subunit (638 aa).

A compositionally biased stretch (polar residues) spans 1–11 (MSSTDQGTNPA). The segment at 1 to 34 (MSSTDQGTNPADTDDLTPTTLSLAGDFPKATEEQ) is disordered.

It belongs to the methylmalonyl-CoA mutase family. Heterodimer of an alpha and a beta chain. Adenosylcob(III)alamin serves as cofactor.

It carries out the reaction (R)-methylmalonyl-CoA = succinyl-CoA. It participates in metabolic intermediate metabolism; propanoyl-CoA degradation; succinyl-CoA from propanoyl-CoA: step 3/3. Its function is as follows. Catalyzes the isomerization of succinyl-CoA to methylmalonyl-CoA during synthesis of propionate from tricarboxylic acid-cycle intermediates. This Propionibacterium freudenreichii subsp. shermanii protein is Methylmalonyl-CoA mutase small subunit (mutA).